The chain runs to 89 residues: MAKKSKIAKFKKQQKLVAQYQELRQELKKEKNYEALRKLPKDSHPNRMKMRDRIDGRPRAYMRKFGMSRVNFRKLAHEGKIPGVKKSSW.

It belongs to the universal ribosomal protein uS14 family. As to quaternary structure, part of the 30S ribosomal subunit. Contacts proteins S3 and S10.

Binds 16S rRNA, required for the assembly of 30S particles and may also be responsible for determining the conformation of the 16S rRNA at the A site. This chain is Small ribosomal subunit protein uS14A, found in Lactococcus lactis subsp. lactis (strain IL1403) (Streptococcus lactis).